Consider the following 361-residue polypeptide: Histidinol-phosphate aminotransferase (361 aa).

Lys-218 bears the N6-(pyridoxal phosphate)lysine mark.

This sequence belongs to the class-II pyridoxal-phosphate-dependent aminotransferase family. Histidinol-phosphate aminotransferase subfamily. In terms of assembly, homodimer. Pyridoxal 5'-phosphate serves as cofactor.

It catalyses the reaction L-histidinol phosphate + 2-oxoglutarate = 3-(imidazol-4-yl)-2-oxopropyl phosphate + L-glutamate. Its pathway is amino-acid biosynthesis; L-histidine biosynthesis; L-histidine from 5-phospho-alpha-D-ribose 1-diphosphate: step 7/9. This Dinoroseobacter shibae (strain DSM 16493 / NCIMB 14021 / DFL 12) protein is Histidinol-phosphate aminotransferase.